A 124-amino-acid polypeptide reads, in one-letter code: MKPGAFQIAEGTITINEGREIREVTVKNTGSRSIQVGSHFHFAEANGALLFDRELAIGMRLDVPSGTSVRFEPGEQKTVSLVEIRGRKTIRGLNGMADTFIDERGKEKTLANLKQAGWMEGVIR.

The protein belongs to the urease beta subunit family. Heterotrimer of UreA (gamma), UreB (beta) and UreC (alpha) subunits. Three heterotrimers associate to form the active enzyme.

The protein resides in the cytoplasm. The enzyme catalyses urea + 2 H2O + H(+) = hydrogencarbonate + 2 NH4(+). Its pathway is nitrogen metabolism; urea degradation; CO(2) and NH(3) from urea (urease route): step 1/1. This is Urease subunit beta from Bacillus subtilis (strain 168).